Consider the following 179-residue polypeptide: Ribosomal RNA small subunit methyltransferase G (179 aa).

Residues glycine 54, phenylalanine 59, isoleucine 105–glutamate 106, and arginine 121 contribute to the S-adenosyl-L-methionine site.

This sequence belongs to the methyltransferase superfamily. RNA methyltransferase RsmG family.

Its subcellular location is the cytoplasm. It carries out the reaction guanosine(527) in 16S rRNA + S-adenosyl-L-methionine = N(7)-methylguanosine(527) in 16S rRNA + S-adenosyl-L-homocysteine. Specifically methylates the N7 position of guanine in position 527 of 16S rRNA. This chain is Ribosomal RNA small subunit methyltransferase G, found in Helicobacter bizzozeronii.